A 504-amino-acid polypeptide reads, in one-letter code: Anaerobic nitric oxide reductase transcription regulator NorR (504 aa).

A 4-aspartylphosphate modification is found at D57. The Sigma-54 factor interaction domain maps to 187–416; that stretch reads MIGLSPGMTQ…LEHAIHRAVV (230 aa). Residues 215-222 and 278-287 contribute to the ATP site; these read GETGTGKE and ADNGTLFLDE. A DNA-binding region (H-T-H motif) is located at residues 479-498; the sequence is WAACARMLETDVANLHRLAK.

It participates in nitrogen metabolism; nitric oxide reduction. Its function is as follows. Required for the expression of anaerobic nitric oxide (NO) reductase, acts as a transcriptional activator for at least the norVW operon. Activation also requires sigma-54. This is Anaerobic nitric oxide reductase transcription regulator NorR from Escherichia coli O157:H7.